Reading from the N-terminus, the 212-residue chain is Synaptosomal-associated protein 25 (212 aa).

T-SNARE coiled-coil homology domains lie at 26–88 (QGVA…LSGM) and 148–210 (DARE…AHQL).

It belongs to the SNAP-25 family. As to expression, exclusively found in brain and ganglia.

It is found in the synapse. Its subcellular location is the synaptosome. Its function is as follows. May play an important role in the synaptic function of specific neuronal systems. Associates with proteins involved in vesicle docking and membrane fusion. This Drosophila melanogaster (Fruit fly) protein is Synaptosomal-associated protein 25 (Snap25).